The chain runs to 122 residues: Large ribosomal subunit protein bL12 (122 aa).

This sequence belongs to the bacterial ribosomal protein bL12 family. Homodimer. Part of the ribosomal stalk of the 50S ribosomal subunit. Forms a multimeric L10(L12)X complex, where L10 forms an elongated spine to which 2 to 4 L12 dimers bind in a sequential fashion. Binds GTP-bound translation factors.

Functionally, forms part of the ribosomal stalk which helps the ribosome interact with GTP-bound translation factors. Is thus essential for accurate translation. This is Large ribosomal subunit protein bL12 from Neisseria lactamica.